A 236-amino-acid chain; its full sequence is Small ribosomal subunit protein uS2c (236 aa).

This sequence belongs to the universal ribosomal protein uS2 family.

The protein resides in the plastid. Its subcellular location is the chloroplast. This Citrus sinensis (Sweet orange) protein is Small ribosomal subunit protein uS2c (rps2).